Consider the following 624-residue polypeptide: MPGLPLTDHDAVNTGCEFDCQRSSDQMCCEHSVAQFSSDQQLNPEENLALYCKPLELYNFIRHRAIENPPYLQRCLLYKIRAKQKKRIQITISLPGSNNKELQAQNIFPLYVLFARPTSNVPIEGHSPIYRFSQARLLTSFNDSGNNDRAEATFVIPDLETLIATQAYGLTFILVSRGTKKNKGRTGQNLCENDCSEKHVDYSSLRKLAGKCFWGKIPITLLNSSLETCADLILGHIVESPISICMSPGYLEPTFLEHDNCLSFCSRKADAMVPYQLQVKVSAAEAGAKDILKSPYNSFSYSDVPPSLLLRIVRLRVGNVLFNYKNTQMSEVTEDFTCPFCLVRCGNFKGLECHMTSSHDLFHYEFWISEDYQAVNVTLKKDNMRTEFVAAEVDNSHRIFYYRSRFKKSRTEILPVARADAHIMESGSPEETQAESEDDVQEENENALIDDSKKLHGSNHSQSEFLAFGKSRKLSANRADPRNRLLLQKRQFIHSHKAQPMTFEEVLSDNDSEDEVDDDIADLEDRRMLDDFVDVTKDEKRIMHMWNSFIRKQSILADSHVPWACEAFSRHHGEELLENSALLWGWRMFMIKLWNHSLLSARTMDTCNRILDDIKNERSDPKKQ.

A C2H2-type zinc finger spans residues 338–359 (CPFCLVRCGNFKGLECHMTSSH). Residues 420 to 445 (DAHIMESGSPEETQAESEDDVQEENE) form a disordered region. Positions 432–445 (TQAESEDDVQEENE) are enriched in acidic residues. The tract at residues 474–609 (LSANRADPRN…SARTMDTCNR (136 aa)) is VEFS-box.

This sequence belongs to the VEFS (VRN2-EMF2-FIS2-SU(Z)12) family. In terms of assembly, component of the polycomb repressive complex 2 (PRC2), which methylates 'Lys-27' residues of histone H3 (H3K27me3), leading to transcriptional repression of the affected target gene. In terms of tissue distribution, widely expressed. Highly expressed in shoot apical meristem and inflorescence meristem. Expressed in roots, leaves and immature seeds.

Its function is as follows. Polycomb group (PcG) protein. PcG proteins act by forming multiprotein complexes, which are required to maintain the transcriptionally repressive state of homeotic genes throughout development. PcG proteins are not required to initiate repression, but to maintain it during later stages of development. They act via the methylation of histones, rendering chromatin heritably changed in its expressibility. This is Polycomb group protein EMF2A from Oryza sativa subsp. japonica (Rice).